A 403-amino-acid chain; its full sequence is Acetate kinase (403 aa).

Residue Asn13 coordinates Mg(2+). Lys20 contacts ATP. Residue Arg94 participates in substrate binding. Asp153 serves as the catalytic Proton donor/acceptor. ATP-binding positions include 213 to 217 (HLGNG), 288 to 290 (DFR), and 336 to 340 (GIGEN). Glu390 is a Mg(2+) binding site.

The protein belongs to the acetokinase family. As to quaternary structure, homodimer. Requires Mg(2+) as cofactor. The cofactor is Mn(2+).

The protein localises to the cytoplasm. The enzyme catalyses acetate + ATP = acetyl phosphate + ADP. The protein operates within metabolic intermediate biosynthesis; acetyl-CoA biosynthesis; acetyl-CoA from acetate: step 1/2. In terms of biological role, catalyzes the formation of acetyl phosphate from acetate and ATP. Can also catalyze the reverse reaction. The polypeptide is Acetate kinase (Buchnera aphidicola subsp. Schizaphis graminum (strain Sg)).